The primary structure comprises 375 residues: N-acetyldiaminopimelate deacetylase (375 aa).

Aspartate 69 is a catalytic residue. Residue glutamate 128 is the Proton acceptor of the active site.

This sequence belongs to the peptidase M20A family. N-acetyldiaminopimelate deacetylase subfamily.

The enzyme catalyses N-acetyl-(2S,6S)-2,6-diaminopimelate + H2O = (2S,6S)-2,6-diaminopimelate + acetate. It participates in amino-acid biosynthesis; L-lysine biosynthesis via DAP pathway; LL-2,6-diaminopimelate from (S)-tetrahydrodipicolinate (acetylase route): step 3/3. Its function is as follows. Catalyzes the conversion of N-acetyl-diaminopimelate to diaminopimelate and acetate. The protein is N-acetyldiaminopimelate deacetylase of Priestia megaterium (strain ATCC 12872 / QMB1551) (Bacillus megaterium).